Consider the following 370-residue polypeptide: Probable trehalose-phosphate phosphatase J (370 aa).

Belongs to the trehalose phosphatase family. The cofactor is a divalent metal cation.

The catalysed reaction is alpha,alpha-trehalose 6-phosphate + H2O = alpha,alpha-trehalose + phosphate. The protein operates within glycan biosynthesis; trehalose biosynthesis. Its function is as follows. Removes the phosphate from trehalose 6-phosphate to produce free trehalose. Trehalose accumulation in plant may improve abiotic stress tolerance. The sequence is that of Probable trehalose-phosphate phosphatase J (TPPJ) from Arabidopsis thaliana (Mouse-ear cress).